Here is a 100-residue protein sequence, read N- to C-terminus: Small ribosomal subunit protein uS14 (100 aa).

This sequence belongs to the universal ribosomal protein uS14 family. Part of the 30S ribosomal subunit. Contacts proteins S3 and S10.

Binds 16S rRNA, required for the assembly of 30S particles and may also be responsible for determining the conformation of the 16S rRNA at the A site. The sequence is that of Small ribosomal subunit protein uS14 from Prochlorococcus marinus (strain MIT 9313).